The primary structure comprises 207 residues: Large ribosomal subunit protein bL25 (207 aa).

This sequence belongs to the bacterial ribosomal protein bL25 family. CTC subfamily. In terms of assembly, part of the 50S ribosomal subunit; part of the 5S rRNA/L5/L18/L25 subcomplex. Contacts the 5S rRNA. Binds to the 5S rRNA independently of L5 and L18.

This is one of the proteins that binds to the 5S RNA in the ribosome where it forms part of the central protuberance. This Azorhizobium caulinodans (strain ATCC 43989 / DSM 5975 / JCM 20966 / LMG 6465 / NBRC 14845 / NCIMB 13405 / ORS 571) protein is Large ribosomal subunit protein bL25.